The following is a 72-amino-acid chain: Delta-actitoxin-Avd2b 1 (72 aa).

The N-terminal stretch at 1 to 21 is a signal peptide; it reads MMNRLLVFLMLGAAFMLVVSA. A propeptide spanning residues 22–42 is cleaved from the precursor; that stretch reads NDAYGDEPAFKDLNQGDESLG. Cystine bridges form between C47–C62, C48–C56, and C50–C67.

It belongs to the sea anemone short toxin (type III) family.

The protein localises to the secreted. It is found in the nematocyst. In terms of biological role, voltage-gated sodium channel (Nav) inhibitor. 1 uM completely inhibits insect voltage-gated sodium channel inactivation (DmNav1 from D.melanogaster). This Anemonia viridis (Snakelocks anemone) protein is Delta-actitoxin-Avd2b 1.